The primary structure comprises 236 residues: Pyridoxine 5'-phosphate synthase (236 aa).

3-amino-2-oxopropyl phosphate is bound at residue Asn-6. Position 8 to 9 (8 to 9 (DH)) interacts with 1-deoxy-D-xylulose 5-phosphate. Position 17 (Arg-17) interacts with 3-amino-2-oxopropyl phosphate. His-42 acts as the Proton acceptor in catalysis. 2 residues coordinate 1-deoxy-D-xylulose 5-phosphate: Arg-44 and His-49. Glu-69 (proton acceptor) is an active-site residue. Residue Thr-99 coordinates 1-deoxy-D-xylulose 5-phosphate. Residue His-192 is the Proton donor of the active site. Residues Gly-193 and 216-217 (GH) each bind 3-amino-2-oxopropyl phosphate.

It belongs to the PNP synthase family. Homooctamer; tetramer of dimers.

It localises to the cytoplasm. It carries out the reaction 3-amino-2-oxopropyl phosphate + 1-deoxy-D-xylulose 5-phosphate = pyridoxine 5'-phosphate + phosphate + 2 H2O + H(+). Its pathway is cofactor biosynthesis; pyridoxine 5'-phosphate biosynthesis; pyridoxine 5'-phosphate from D-erythrose 4-phosphate: step 5/5. Its function is as follows. Catalyzes the complicated ring closure reaction between the two acyclic compounds 1-deoxy-D-xylulose-5-phosphate (DXP) and 3-amino-2-oxopropyl phosphate (1-amino-acetone-3-phosphate or AAP) to form pyridoxine 5'-phosphate (PNP) and inorganic phosphate. This is Pyridoxine 5'-phosphate synthase from Aquifex pyrophilus.